The chain runs to 312 residues: tRNA dimethylallyltransferase (312 aa).

11-18 (GPTAAGKS) serves as a coordination point for ATP. A substrate-binding site is contributed by 13 to 18 (TAAGKS). 3 interaction with substrate tRNA regions span residues 36–39 (DSAT), 160–164 (QRIQR), and 243–248 (RCVGYR).

The protein belongs to the IPP transferase family. In terms of assembly, monomer. Mg(2+) is required as a cofactor.

It carries out the reaction adenosine(37) in tRNA + dimethylallyl diphosphate = N(6)-dimethylallyladenosine(37) in tRNA + diphosphate. Functionally, catalyzes the transfer of a dimethylallyl group onto the adenine at position 37 in tRNAs that read codons beginning with uridine, leading to the formation of N6-(dimethylallyl)adenosine (i(6)A). The polypeptide is tRNA dimethylallyltransferase (Bordetella avium (strain 197N)).